We begin with the raw amino-acid sequence, 181 residues long: ATP synthase subunit delta (181 aa).

The protein belongs to the ATPase delta chain family. As to quaternary structure, F-type ATPases have 2 components, F(1) - the catalytic core - and F(0) - the membrane proton channel. F(1) has five subunits: alpha(3), beta(3), gamma(1), delta(1), epsilon(1). F(0) has three main subunits: a(1), b(2) and c(10-14). The alpha and beta chains form an alternating ring which encloses part of the gamma chain. F(1) is attached to F(0) by a central stalk formed by the gamma and epsilon chains, while a peripheral stalk is formed by the delta and b chains.

Its subcellular location is the cell inner membrane. Functionally, f(1)F(0) ATP synthase produces ATP from ADP in the presence of a proton or sodium gradient. F-type ATPases consist of two structural domains, F(1) containing the extramembraneous catalytic core and F(0) containing the membrane proton channel, linked together by a central stalk and a peripheral stalk. During catalysis, ATP synthesis in the catalytic domain of F(1) is coupled via a rotary mechanism of the central stalk subunits to proton translocation. This protein is part of the stalk that links CF(0) to CF(1). It either transmits conformational changes from CF(0) to CF(1) or is implicated in proton conduction. The chain is ATP synthase subunit delta from Chlorobium limicola (strain DSM 245 / NBRC 103803 / 6330).